The primary structure comprises 412 residues: MKQWIAALLLMLIPGVQAAKPQKVTLMVDDVPVAQVLQALAEQEKLNLVVSPDVSGTVSLHLTDVPWKQALQTVVKSAGLITRQEGNILSVHSIAWQNNNIARQEAEQARAQANLPLENRSITLQYADAGELAKAGEKLLSAKGSMTVDKRTNRLLLRDNKTALSALEQWVAQMDLPVGQVELSAHIVTINEKSLRELGVKWTLADAQHAGGVGQVTTLGSDLSVATATTHVGFNIGRINGRLLDLELSALEQKQQLDIIASPRLLASHLQPASIKQGSEIPYQVSSGESGATSVEFKEAVLGMEVTPTVLQKGRIRLKLHISQNVPGQVLQQADGEVLAIDKQEIETQVEVKSGETLALGGIFTRKNKSGQDSVPLLGDIPWFGQLFRHDGKEDERRELVVFITPRLVSSE.

The signal sequence occupies residues 1–18 (MKQWIAALLLMLIPGVQA).

Belongs to the bacterial secretin family. PilQ subfamily.

Its subcellular location is the cell outer membrane. Required for the use of extracellular DNA as a nutrient. Could be the porin responsible for transport of DNA across the outer membrane. The protein is DNA utilization protein HofQ (hofQ) of Escherichia coli (strain K12).